Consider the following 231-residue polypeptide: 2-C-methyl-D-erythritol 4-phosphate cytidylyltransferase (231 aa).

Belongs to the IspD/TarI cytidylyltransferase family. IspD subfamily.

It carries out the reaction 2-C-methyl-D-erythritol 4-phosphate + CTP + H(+) = 4-CDP-2-C-methyl-D-erythritol + diphosphate. The protein operates within isoprenoid biosynthesis; isopentenyl diphosphate biosynthesis via DXP pathway; isopentenyl diphosphate from 1-deoxy-D-xylulose 5-phosphate: step 2/6. Catalyzes the formation of 4-diphosphocytidyl-2-C-methyl-D-erythritol from CTP and 2-C-methyl-D-erythritol 4-phosphate (MEP). This is 2-C-methyl-D-erythritol 4-phosphate cytidylyltransferase from Xylella fastidiosa (strain M23).